The sequence spans 391 residues: 3-ketoacyl-CoA thiolase (391 aa).

C90 acts as the Acyl-thioester intermediate in catalysis. Residues H347 and C377 each act as proton acceptor in the active site.

The protein belongs to the thiolase-like superfamily. Thiolase family.

It catalyses the reaction an acyl-CoA + acetyl-CoA = a 3-oxoacyl-CoA + CoA. The protein operates within lipid metabolism; fatty acid beta-oxidation. Involved in the degradation of long-chain fatty acids. The protein is 3-ketoacyl-CoA thiolase (fadA) of Bacillus subtilis (strain 168).